The primary structure comprises 481 residues: ATP synthase subunit beta, chloroplastic (481 aa).

163 to 170 (GGAGVGKT) is an ATP binding site.

The protein belongs to the ATPase alpha/beta chains family. F-type ATPases have 2 components, CF(1) - the catalytic core - and CF(0) - the membrane proton channel. CF(1) has five subunits: alpha(3), beta(3), gamma(1), delta(1), epsilon(1). CF(0) has four main subunits: a(1), b(1), b'(1) and c(9-12).

The protein resides in the plastid. Its subcellular location is the chloroplast thylakoid membrane. The enzyme catalyses ATP + H2O + 4 H(+)(in) = ADP + phosphate + 5 H(+)(out). Its function is as follows. Produces ATP from ADP in the presence of a proton gradient across the membrane. The catalytic sites are hosted primarily by the beta subunits. The chain is ATP synthase subunit beta, chloroplastic from Tupiella akineta (Green alga).